A 328-amino-acid chain; its full sequence is Neuropeptides B/W receptor type 1 (328 aa).

At Met-1–Ala-37 the chain is on the extracellular side. Residues Asn-3, Asn-13, and Asn-25 are each glycosylated (N-linked (GlcNAc...) asparagine). The helical transmembrane segment at Val-38–Val-61 threads the bilayer. The Cytoplasmic portion of the chain corresponds to Leu-62–Thr-72. The chain crosses the membrane as a helical span at residues Asn-73–Phe-97. Topologically, residues Leu-98–Ile-112 are extracellular. Cys-109 and Cys-188 form a disulfide bridge. A helical membrane pass occupies residues Val-113–Ala-132. The Cytoplasmic segment spans residues Asp-133 to Ala-157. A helical membrane pass occupies residues Val-158–Ala-177. Over Arg-178–Ala-202 the chain is Extracellular. The helical transmembrane segment at Ser-203 to Thr-224 threads the bilayer. Residues Thr-225 to Arg-248 lie on the Cytoplasmic side of the membrane. The helical transmembrane segment at Val-249–Val-273 threads the bilayer. The Extracellular portion of the chain corresponds to Ala-274–Pro-283. Residues Leu-284 to Ala-298 form a helical membrane-spanning segment. The Cytoplasmic segment spans residues Asn-299–Ala-328.

Belongs to the G-protein coupled receptor 1 family. As to expression, found in cerebellum and frontal cortex. Detected at high levels in hippocampus, amygdala and trachea; at moderate levels in fetal brain, pituitary gland and prostate. Not in caudate, accumbens, kidney or liver. Also detected at high levels in lung carcinoma.

Its subcellular location is the cell membrane. Functionally, interacts specifically with a number of opioid ligands. Receptor for neuropeptides B and W, which may be involved in neuroendocrine system regulation, food intake and the organization of other signals. Has a higher affinity for neuropeptide B. The sequence is that of Neuropeptides B/W receptor type 1 (NPBWR1) from Homo sapiens (Human).